The sequence spans 156 residues: ATP synthase subunit b (156 aa).

The helical transmembrane segment at 5–25 (LTLIGQAIAFAIFVAFCMKFV) threads the bilayer.

The protein belongs to the ATPase B chain family. In terms of assembly, F-type ATPases have 2 components, F(1) - the catalytic core - and F(0) - the membrane proton channel. F(1) has five subunits: alpha(3), beta(3), gamma(1), delta(1), epsilon(1). F(0) has three main subunits: a(1), b(2) and c(10-14). The alpha and beta chains form an alternating ring which encloses part of the gamma chain. F(1) is attached to F(0) by a central stalk formed by the gamma and epsilon chains, while a peripheral stalk is formed by the delta and b chains.

It is found in the cell inner membrane. Its function is as follows. F(1)F(0) ATP synthase produces ATP from ADP in the presence of a proton or sodium gradient. F-type ATPases consist of two structural domains, F(1) containing the extramembraneous catalytic core and F(0) containing the membrane proton channel, linked together by a central stalk and a peripheral stalk. During catalysis, ATP synthesis in the catalytic domain of F(1) is coupled via a rotary mechanism of the central stalk subunits to proton translocation. Component of the F(0) channel, it forms part of the peripheral stalk, linking F(1) to F(0). This is ATP synthase subunit b from Acinetobacter baylyi (strain ATCC 33305 / BD413 / ADP1).